The following is an 81-amino-acid chain: MKTLLLSPVVVTIVCLDLGYTMTCCNQQSSQPKTTTNCAGNSCYKKTWSDHRGTIIERGCGCPQVKSGIKLECCHTNECNN.

The first 21 residues, 1–21 (MKTLLLSPVVVTIVCLDLGYT), serve as a signal peptide directing secretion. Cystine bridges form between cysteine 24-cysteine 43, cysteine 38-cysteine 60, cysteine 62-cysteine 73, and cysteine 74-cysteine 79.

The protein belongs to the three-finger toxin family. Short-chain subfamily. Type I alpha-neurotoxin sub-subfamily. Expressed by the venom gland.

Its subcellular location is the secreted. Its function is as follows. Binds to muscle nicotinic acetylcholine receptor (nAChR) and inhibit acetylcholine from binding to the receptor, thereby impairing neuromuscular transmission. In Hydrophis peronii (Spiny-headed seasnake), this protein is Short neurotoxin 1.